A 325-amino-acid polypeptide reads, in one-letter code: MSEPEYRGNSFTGSRHALGINAPELAQYQDEPAQMRRRGVGKSGYLKLRFAKREHRSILAEMERRVPSMVQKALYWDEEMPELPCVTMISTSGCILQGDRLATDVIVEAGACAHVTTQSATKVHMMNANYASQIQNFTVEEGGYLEFMPDPLIPHRNSRFITDTTINIHPTATAIYSEVLMSGRKYHHADERFGFDVYSSRVAAHVFLGKEQPAGKELFVEKYVLEPKSESLDAIGVMQSFDAFGNVILLTPKEHHERILARVPAHFDIKGGIASGATRLPNDCGLVFKALGIDSAGVKNEIRQFWKIAREEILGVTLPEKFLWR.

It belongs to the UreD family. UreD, UreF and UreG form a complex that acts as a GTP-hydrolysis-dependent molecular chaperone, activating the urease apoprotein by helping to assemble the nickel containing metallocenter of UreC. The UreE protein probably delivers the nickel.

Its subcellular location is the cytoplasm. In terms of biological role, required for maturation of urease via the functional incorporation of the urease nickel metallocenter. Functionally, expression of the urease operon increases the likelihood of bacterial survival by contributing to acid resistance in vitro and in vivo in BALB/c mice. Y.enterocolitica enters the body via an oral path and must survive the acidic stomach before being able to colonize the intestinal mucosa. This chain is Urease accessory protein UreD, found in Yersinia enterocolitica.